Reading from the N-terminus, the 360-residue chain is Vignain (360 aa).

A signal peptide spans 1 to 20 (MQKFILLALSLALVLAITES). Residues 21–124 (FDFHEKELES…NGTFMYEKVD (104 aa)) constitute a propeptide, activation peptide. A glycan (N-linked (GlcNAc...) asparagine) is linked at Asn-115. Disulfide bonds link Cys-147-Cys-189, Cys-181-Cys-222, and Cys-280-Cys-332. Cys-150 is an active-site residue. Catalysis depends on residues His-286 and Asn-307. The disordered stretch occupies residues 341 to 360 (PIKKSSNNPSGIKSSPKDEL). Over residues 344-353 (KSSNNPSGIK) the composition is skewed to polar residues. A propeptide spans 354 to 360 (SSPKDEL) (removed in mature form). Residues 357-360 (KDEL) form a prevents secretion from ER region.

It belongs to the peptidase C1 family. Post-translationally, the potential N-glycosylation site at Asn-115 is not glycosylated.

The protein localises to the cytoplasmic vesicle. With respect to regulation, low pH triggers activation of the protease and removal of the propeptide and the KDEL motif. Its function is as follows. Involved in programmed cell death. Shows a pronounced preference for hydrophobic residues in the P2 position and no obvious preference in the P1 position of the cleavage site. Accepts proline at the P1 and P1' positions. The sequence is that of Vignain (CYSEP) from Ricinus communis (Castor bean).